Consider the following 285-residue polypeptide: 2-dehydro-3-deoxyphosphooctonate aldolase (285 aa).

It belongs to the KdsA family.

It localises to the cytoplasm. The enzyme catalyses D-arabinose 5-phosphate + phosphoenolpyruvate + H2O = 3-deoxy-alpha-D-manno-2-octulosonate-8-phosphate + phosphate. It participates in carbohydrate biosynthesis; 3-deoxy-D-manno-octulosonate biosynthesis; 3-deoxy-D-manno-octulosonate from D-ribulose 5-phosphate: step 2/3. The protein operates within bacterial outer membrane biogenesis; lipopolysaccharide biosynthesis. This chain is 2-dehydro-3-deoxyphosphooctonate aldolase, found in Variovorax paradoxus (strain S110).